The following is a 448-amino-acid chain: Glutamate--tRNA ligase 1 (448 aa).

The short motif at 10–20 (PSPTGMLHVGN) is the 'HIGH' region element. The 'KMSKS' region motif lies at 240-244 (KISKR). ATP is bound at residue Lys-243.

This sequence belongs to the class-I aminoacyl-tRNA synthetase family. Glutamate--tRNA ligase type 1 subfamily. Monomer.

The protein resides in the cytoplasm. The enzyme catalyses tRNA(Glu) + L-glutamate + ATP = L-glutamyl-tRNA(Glu) + AMP + diphosphate. Catalyzes the attachment of glutamate to tRNA(Glu) in a two-step reaction: glutamate is first activated by ATP to form Glu-AMP and then transferred to the acceptor end of tRNA(Glu). This Rickettsia typhi (strain ATCC VR-144 / Wilmington) protein is Glutamate--tRNA ligase 1.